The following is a 252-amino-acid chain: TLC domain-containing protein 1 (252 aa).

Positions 1–29 (MGPGWRAPSAALVGGSVALFGALRRAALA) are cleaved as a signal peptide. Over 30 to 47 (LPRPAAVRSRPGRVWRWR) the chain is Extracellular. A TLC domain is found at 41–235 (GRVWRWRNLL…LLRSDFFPSL (195 aa)). The chain crosses the membrane as a helical span at residues 48–68 (NLLVSFAHSVLAGLWALFSLW). The Cytoplasmic portion of the chain corresponds to 69–84 (QSPELLSDIQDGYSVS). A helical membrane pass occupies residues 85–105 (GHLLVCFSSGYFIHDSLDIIF). Over 106 to 124 (NQQSRSSWEYLVHHAMAIS) the chain is Extracellular. An intramembrane region (helical) is located at residues 125 to 145 (AFVSLIITGRFLVAAMLLLLV). Topologically, residues 146–174 (EVSNIFLTIRMLLKMSNVPSPALYEANKY) are extracellular. Residues 175–195 (VNLVMYFAFRLAPQVYLTWYF) traverse the membrane as a helical segment. The Cytoplasmic portion of the chain corresponds to 196–202 (VRYVEVQ). Residues 203-223 (GQGAFLMANLLLLDAMILMYF) traverse the membrane as a helical segment. The Extracellular portion of the chain corresponds to 224-252 (SRLLRSDFFPSLRKGSVGRDVDGEKFLID).

In terms of assembly, interacts with CACNA1C in vitro; however the relevance of the interaction in vivo is unclear.

The protein resides in the cell membrane. Its function is as follows. Regulates the composition and fluidity of the plasma membrane. Inhibits the incorporation of membrane-fluidizing phospholipids containing omega-3 long-chain polyunsaturated fatty acids (LCPUFA) and thereby promotes membrane rigidity. Does not appear to have any effect on LCPUFA synthesis. The protein is TLC domain-containing protein 1 (TLCD1) of Gallus gallus (Chicken).